A 436-amino-acid chain; its full sequence is Fibrinogen gamma chain (436 aa).

Residues methionine 1–alanine 25 form the signal peptide. Asparagine 77 carries an N-linked (GlcNAc...) asparagine glycan. The 247-residue stretch at glutamine 169–asparagine 415 folds into the Fibrinogen C-terminal domain. An intrachain disulfide couples cysteine 178 to cysteine 207. 3 residues coordinate Ca(2+): aspartate 343, aspartate 345, and glycine 349. Residues cysteine 351 and cysteine 364 are joined by a disulfide bond. Glutamine 423 is covalently cross-linked (Isoglutamyl lysine isopeptide (Gln-Lys) (interchain with K-431)). Position 430 is a phosphoserine (serine 430). Residue lysine 431 forms an Isoglutamyl lysine isopeptide (Lys-Gln) (interchain with Q-423) linkage.

In terms of assembly, heterohexamer; disulfide linked. Contains 2 sets of 3 non-identical chains (alpha, beta and gamma). The 2 heterotrimers are in head to head conformation with the N-termini in a small central domain. Post-translationally, conversion of fibrinogen to fibrin is triggered by thrombin, which cleaves fibrinopeptides A and B from alpha and beta chains, and thus exposes the N-terminal polymerization sites responsible for the formation of the soft clot. The soft clot is converted into the hard clot by factor XIIIA which catalyzes the epsilon-(gamma-glutamyl)lysine cross-linking between gamma chains (stronger) and between alpha chains (weaker) of different monomers.

It is found in the secreted. Together with fibrinogen alpha (FGA) and fibrinogen beta (FGB), polymerizes to form an insoluble fibrin matrix. Fibrin has a major function in hemostasis as one of the primary components of blood clots. In addition, functions during the early stages of wound repair to stabilize the lesion and guide cell migration during re-epithelialization. Was originally thought to be essential for platelet aggregation, based on in vitro studies using anticoagulated blood. However, subsequent studies have shown that it is not absolutely required for thrombus formation in vivo. Enhances expression of SELP in activated platelets via an ITGB3-dependent pathway. Maternal fibrinogen is essential for successful pregnancy. Fibrin deposition is also associated with infection, where it protects against IFNG-mediated hemorrhage. May also facilitate the immune response via both innate and T-cell mediated pathways. This chain is Fibrinogen gamma chain (Fgg), found in Mus musculus (Mouse).